The sequence spans 678 residues: Glycine--tRNA ligase beta subunit (678 aa).

Belongs to the class-II aminoacyl-tRNA synthetase family. Tetramer of two alpha and two beta subunits.

The protein localises to the cytoplasm. The enzyme catalyses tRNA(Gly) + glycine + ATP = glycyl-tRNA(Gly) + AMP + diphosphate. In Streptococcus pneumoniae (strain Hungary19A-6), this protein is Glycine--tRNA ligase beta subunit.